The sequence spans 835 residues: Transcription intermediary factor 1-beta (835 aa).

The segment covering 14 to 24 has biased composition (low complexity); sequence AATAASAASGS. The interval 14–57 is disordered; sequence AATAASAASGSPGSGEGSAGGEKRPAASSAAAASASASSPAGGG. A phosphoserine mark is found at Ser24, Ser27, and Ser31. Lys36 is covalently cross-linked (Glycyl lysine isopeptide (Lys-Gly) (interchain with G-Cter in SUMO2)). Residues 39-53 are compositionally biased toward low complexity; it reads AASSAAAASASASSP. At Ser52 the chain carries Phosphoserine. The segment at 67–123 adopts an RING-type zinc-finger fold; that stretch reads CGVCRERLRPERDPRLLPCLHSACSACLGPATPAAANNSGDGGSAGDGAMVDCPVCK. A Glycyl lysine isopeptide (Lys-Gly) (interchain with G-Cter in SUMO2) cross-link involves residue Lys129. Ser140 bears the Phosphoserine mark. The segment at 150-197 adopts a B box-type 1; atypical zinc-finger fold; that stretch reads DANQCCTSCEDNAPATSYCVECSEPLCETCVEAHQRVKYTKDHTVRST. Residues Cys155, Cys158, Cys179, and His183 each contribute to the Zn(2+) site. Lys201 is covalently cross-linked (Glycyl lysine isopeptide (Lys-Gly) (interchain with G-Cter in SUMO2)). Residues 206–247 form a B box-type 2 zinc finger; that stretch reads ERTVYCNVHKHEPLVLFCESCDTLTCRDCQLNAHKDHQYQFL. Cys211, His214, Cys234, and His239 together coordinate Zn(2+). Residues 248–378 form a leucine zipper alpha helical coiled-coil region region; the sequence is EDAVRNQRKL…LIYFQLHRAL (131 aa). Positions 249–378 are interaction with MAGEC2; the sequence is DAVRNQRKLL…LIYFQLHRAL (130 aa). Glycyl lysine isopeptide (Lys-Gly) (interchain with G-Cter in SUMO2) cross-links involve residues Lys256 and Lys263. Lys268 carries the N6-acetyllysine modification. A Glycyl lysine isopeptide (Lys-Gly) (interchain with G-Cter in SUMO2) cross-link involves residue Lys274. At Lys306 the chain carries N6-acetyllysine; alternate. A Glycyl lysine isopeptide (Lys-Gly) (interchain with G-Cter in SUMO2); alternate cross-link involves residue Lys306. Lys321 participates in a covalent cross-link: Glycyl lysine isopeptide (Lys-Gly) (interchain with G-Cter in SUMO2). Residue Lys342 is modified to N6-acetyllysine. Residue Lys368 forms a Glycyl lysine isopeptide (Lys-Gly) (interchain with G-Cter in SUMO2) linkage. The segment at 368 to 372 is involved in binding PPP1CA; that stretch reads KLIYF. The residue at position 379 (Lys379) is an N6-acetyllysine; alternate. Lys379 participates in a covalent cross-link: Glycyl lysine isopeptide (Lys-Gly) (interchain with G-Cter in SUMO2); alternate. Residue Lys379 forms a Glycyl lysine isopeptide (Lys-Gly) (interchain with G-Cter in SUMO1); alternate linkage. A Glycyl lysine isopeptide (Lys-Gly) (interchain with G-Cter in SUMO2) cross-link involves residue Lys409. Residues 413–481 are disordered; that stretch reads ERPGTNSTGP…SRSGEGEVSG (69 aa). Phosphoserine is present on Ser419. Lys436 participates in a covalent cross-link: Glycyl lysine isopeptide (Lys-Gly) (interchain with G-Cter in SUMO2). Residues 436-445 show a composition bias toward polar residues; sequence KQGSGSSQPM. A phosphoserine mark is found at Ser439 and Ser441. Lys470 participates in a covalent cross-link: Glycyl lysine isopeptide (Lys-Gly) (interchain with G-Cter in SUMO2); alternate. Residue Lys470 forms a Glycyl lysine isopeptide (Lys-Gly) (interchain with G-Cter in SUMO1); alternate linkage. Arg471 is subject to Citrulline. Ser472 carries the phosphoserine modification. Residue Arg473 is modified to Citrulline. A phosphoserine mark is found at Ser474, Ser480, and Ser490. The tract at residues 477–514 is HP1 box; it reads GEVSGLMRKVPRVSLERLDLDLTSDSQPPVFKVFPGST. The PxVxL motif motif lies at 482–495; it reads LMRKVPRVSLERLD. Position 499 is a phosphothreonine (Thr499). Residue Ser502 is modified to Phosphoserine. Lys508 is covalently cross-linked (Glycyl lysine isopeptide (Lys-Gly) (interchain with G-Cter in SUMO2)). A Glycyl lysine isopeptide (Lys-Gly) (interchain with G-Cter in SUMO2); alternate cross-link involves residue Lys555. A Glycyl lysine isopeptide (Lys-Gly) (interchain with G-Cter in SUMO); alternate cross-link involves residue Lys555. A Glycyl lysine isopeptide (Lys-Gly) (interchain with G-Cter in SUMO2) cross-link involves residue Lys576. Residue Ser595 is modified to Phosphoserine. The PHD-type zinc finger occupies 626 to 673; sequence ATICRVCQKPGDLVMCNQCEFCFHLDCHLPSLQDVPGEEWSCSLCHVL. A Glycyl lysine isopeptide (Lys-Gly) (interchain with G-Cter in SUMO) cross-link involves residue Lys677. Residues Ser684, Ser690, and Ser698 each carry the phosphoserine modification. A Bromo domain is found at 696-800; that stretch reads KLSPANQRKC…RFFETRMNDA (105 aa). Lys751 participates in a covalent cross-link: Glycyl lysine isopeptide (Lys-Gly) (interchain with G-Cter in SUMO2); alternate. Lys751 is covalently cross-linked (Glycyl lysine isopeptide (Lys-Gly) (interchain with G-Cter in SUMO1); alternate). Lys751 participates in a covalent cross-link: Glycyl lysine isopeptide (Lys-Gly) (interchain with G-Cter in SUMO); alternate. Ser753 carries the phosphoserine modification. The residue at position 756 (Tyr756) is a Phosphotyrosine. A Phosphoserine modification is found at Ser758. N6-acetyllysine; alternate is present on residues Lys771, Lys775, and Lys780. Residues Lys771, Lys775, and Lys780 each participate in a glycyl lysine isopeptide (Lys-Gly) (interchain with G-Cter in SUMO2); alternate cross-link. A Glycyl lysine isopeptide (Lys-Gly) (interchain with G-Cter in SUMO1); alternate cross-link involves residue Lys780. Ser785 is modified (phosphoserine). A Glycyl lysine isopeptide (Lys-Gly) (interchain with G-Cter in SUMO2) cross-link involves residue Lys805. Ser825 carries the post-translational modification Phosphoserine; by ATM and ATR and dsDNA kinase.

The protein belongs to the TRIM/RBCC family. In terms of assembly, interacts with ZNF382. Interacts with SETX. Oligomer; the RBCC domain homotrimerizes and interacts with one molecule of KRAB to form the KRAB-KAP1 corepressor complex. Binding to a KRAB domain is an absolute requirement for silencing gene expression. Interacts with CEBPB and NR3C1. Interacts with a number of KRAB-ZFP proteins including ZNF10, ZFP53, ZFP68 and ZNF256. Interacts with NCOR1, NR3C1 and CHD3. Interacts with CEBPB (via the RING-type and PHD-type zinc fingers). Component of a ternary complex that includes TRIM28, a HP1 protein (CBX1, CBX3 OR CBX5), a KRAB domain-containing protein, and DNA. Interacts with CBX5 (via the PxVxL motif); the interaction occurs in interphase nuclei and competes for binding POGZ. Interacts with POGZ; the interaction competes for interaction with CBX5. Interacts with SETDB1; the interaction is enhanced by KAP1 sumoylation, stimulates SETDB1 histone methyltransferase activity and gene silencing. Interacts (via the PHD-type zinc finger) with UBE2I; the interaction is required for sumoylation and repressor activity. Component of the TRIM28/KAP1-ERBB4-MDM2 complex involved in connecting growth factor and DNA damage responses. Interacts directly with ERBB4; the interaction represses ERBB4-mediated transcription activity. Interacts with MDM2; the interaction contributes to p53/TP53 inactivation. Component of the TRIM28/KAP1-MDM2-p53/TP53; involved in regulating p53/TP53 stabilization and activity. Interacts (via the leucine zipper alpha helical coiled-coil) with E2F1 (central region); the interaction inhibits E2F1 acetylation and transcriptional activity. Interacts with PPP1CA; the interaction dephosphorylates TRIM28 at Ser-824 and forms a complex at the p21 promoter site. Interacts with PPP1CB; the interaction is weak but is increased on dephosphorylation at Ser-824. Interacts with SMARCAD1. Interacts with, and sumoylates IRF7. Interacts with MAGEC2. Part of a complex composed of TRIM28, HDAC1, HDAC2 and EHMT2. Interacts with AICDA. The large PER complex involved in the histone methylation is composed of at least PER2, CBX3, TRIM28, SUV39H1 and/or SUV39H2; CBX3 mediates the formation of the complex. Interacts with NR4A3; the interactions potentiates NR4A3 activity on NurRE promoter. Interacts (unphosphorylated or phosphorylated form) with ZBTB1 (via BTB domain). Probably part of a corepressor complex containing ZNF304, TRIM28, SETDB1 and DNMT1. Interacts with ATRX. Forms a complex with ATRX, SETDB1 and ZNF274. Interacts with ZFP568; the interaction mediates ZFP568 transcriptional repression activity. Interacts with RRP1B. Interacts with CRY1. Interacts with ZNF263; recruited to the SIX3 promoter along with other proteins involved in chromatin modification and transcriptional corepression where it contributes to transcriptional repression. Interacts with CYREN (via XLF motif). Interacts with TRIM17; this interaction prevents TRIM28 activity. Interacts with ZNF746. Interacts with PHF13. Interacts with ZNF354C. Interacts with ZNF432; the interaction is independent of PARP1. ATM-induced phosphorylation on Ser-825 represses sumoylation leading to the de-repression of expression of a subset of genes involved in cell cycle control and apoptosis in response to genotoxic stress. Dephosphorylation by the phosphatases, PPP1CA and PP1CB forms, allows sumoylation and expression of TRIM28 target genes. Post-translationally, sumoylation/desumoylation events regulate TRIM28-mediated transcriptional repression. Sumoylation is required for interaction with CHD3 and SETDB1 and the corepressor activity. Represses and is repressed by Ser-824 phosphorylation. Enhances the TRIM28 corepressor activity, inhibiting transcriptional activity of a number of genes including GADD45A and CDKN1A/p21. Lys-555, Lys-780 and Lys-805 are the major sites of sumoylation. In response to Dox-induced DNA damage, enhanced phosphorylation on Ser-825 prevents sumoylation and allows de-repression of CDKN1A/p21. In terms of processing, auto-ubiquitinated; enhanced by MAGEA2 and MAGEC2. Citrullinated by PADI4. Post-translationally, ADP-ribosylated by SIRT6, promoting TRIM28/KAP1 interaction with CBX5, thereby contributing to the packaging of LINE-1 retrotransposon elements into transcriptionally repressive heterochromatin.

It is found in the nucleus. It carries out the reaction S-ubiquitinyl-[E2 ubiquitin-conjugating enzyme]-L-cysteine + [acceptor protein]-L-lysine = [E2 ubiquitin-conjugating enzyme]-L-cysteine + N(6)-ubiquitinyl-[acceptor protein]-L-lysine.. Its pathway is protein modification; protein sumoylation. In terms of biological role, nuclear corepressor for KRAB domain-containing zinc finger proteins (KRAB-ZFPs). Mediates gene silencing by recruiting CHD3, a subunit of the nucleosome remodeling and deacetylation (NuRD) complex, and SETDB1 (which specifically methylates histone H3 at 'Lys-9' (H3K9me)) to the promoter regions of KRAB target genes. Enhances transcriptional repression by coordinating the increase in H3K9me, the decrease in histone H3 'Lys-9 and 'Lys-14' acetylation (H3K9ac and H3K14ac, respectively) and the disposition of HP1 proteins to silence gene expression. Recruitment of SETDB1 induces heterochromatinization. May play a role as a coactivator for CEBPB and NR3C1 in the transcriptional activation of ORM1. Also a corepressor for ERBB4. Inhibits E2F1 activity by stimulating E2F1-HDAC1 complex formation and inhibiting E2F1 acetylation. May serve as a partial backup to prevent E2F1-mediated apoptosis in the absence of RB1. Important regulator of CDKN1A/p21(CIP1). Has E3 SUMO-protein ligase activity toward itself via its PHD-type zinc finger. Also specifically sumoylates IRF7, thereby inhibiting its transactivation activity. Ubiquitinates p53/TP53 leading to its proteasomal degradation; the function is enhanced by MAGEC2 and MAGEA2, and possibly MAGEA3 and MAGEA6. Mediates the nuclear localization of KOX1, ZNF268 and ZNF300 transcription factors. In association with isoform 2 of ZFP90, is required for the transcriptional repressor activity of FOXP3 and the suppressive function of regulatory T-cells (Treg). Probably forms a corepressor complex required for activated KRAS-mediated promoter hypermethylation and transcriptional silencing of tumor suppressor genes (TSGs) or other tumor-related genes in colorectal cancer (CRC) cells. Required to maintain a transcriptionally repressive state of genes in undifferentiated embryonic stem cells (ESCs). In ESCs, in collaboration with SETDB1, is also required for H3K9me3 and silencing of endogenous and introduced retroviruses in a DNA-methylation independent-pathway. Associates at promoter regions of tumor suppressor genes (TSGs) leading to their gene silencing. The SETDB1-TRIM28-ZNF274 complex may play a role in recruiting ATRX to the 3'-exons of zinc finger genes with atypical chromatin signatures to establish or maintain/protect H3K9me3 at these transcriptionally active regions. In Rattus norvegicus (Rat), this protein is Transcription intermediary factor 1-beta.